A 208-amino-acid polypeptide reads, in one-letter code: Uracil phosphoribosyltransferase (208 aa).

5-phospho-alpha-D-ribose 1-diphosphate-binding positions include R78, R103, and 130–138; that span reads DPMLATGGS. Residues I193 and 198–200 each bind uracil; that span reads GDA. D199 serves as a coordination point for 5-phospho-alpha-D-ribose 1-diphosphate.

This sequence belongs to the UPRTase family. The cofactor is Mg(2+).

The enzyme catalyses UMP + diphosphate = 5-phospho-alpha-D-ribose 1-diphosphate + uracil. It participates in pyrimidine metabolism; UMP biosynthesis via salvage pathway; UMP from uracil: step 1/1. With respect to regulation, allosterically activated by GTP. In terms of biological role, catalyzes the conversion of uracil and 5-phospho-alpha-D-ribose 1-diphosphate (PRPP) to UMP and diphosphate. This is Uracil phosphoribosyltransferase from Shewanella sediminis (strain HAW-EB3).